Reading from the N-terminus, the 185-residue chain is Ribosome-recycling factor (185 aa).

The protein belongs to the RRF family.

The protein resides in the cytoplasm. Responsible for the release of ribosomes from messenger RNA at the termination of protein biosynthesis. May increase the efficiency of translation by recycling ribosomes from one round of translation to another. In Wolbachia pipientis subsp. Culex pipiens (strain wPip), this protein is Ribosome-recycling factor.